The chain runs to 330 residues: Flotillin-like protein FloA (330 aa).

2 consecutive transmembrane segments (helical) span residues 6-26 (LFLL…FTFV) and 28-48 (VMLW…TLIG).

This sequence belongs to the flotillin-like FloA family. As to quaternary structure, homooligomerizes.

It localises to the cell membrane. It is found in the membrane raft. Functionally, found in functional membrane microdomains (FMM) that may be equivalent to eukaryotic membrane rafts. FMMs are highly dynamic and increase in number as cells age. Flotillins are thought to be important factors in membrane fluidity. This Bacillus licheniformis (strain ATCC 14580 / DSM 13 / JCM 2505 / CCUG 7422 / NBRC 12200 / NCIMB 9375 / NCTC 10341 / NRRL NRS-1264 / Gibson 46) protein is Flotillin-like protein FloA.